We begin with the raw amino-acid sequence, 136 residues long: Protein PsiE (136 aa).

Helical transmembrane passes span 15-35, 55-75, 82-102, and 108-128; these read ILQT…VVFL, YELV…ALIV, FHFP…RLII, and PLDV…LWLC.

This sequence belongs to the PsiE family.

It localises to the cell inner membrane. The protein is Protein PsiE of Escherichia coli O17:K52:H18 (strain UMN026 / ExPEC).